We begin with the raw amino-acid sequence, 806 residues long: Transitional endoplasmic reticulum ATPase (806 aa).

N-acetylalanine is present on Ala2. Phosphoserine occurs at positions 3 and 7. Lys8 is covalently cross-linked (Glycyl lysine isopeptide (Lys-Gly) (interchain with G-Cter in SUMO2)). Ser13 carries the post-translational modification Phosphoserine. Lys18 is covalently cross-linked (Glycyl lysine isopeptide (Lys-Gly) (interchain with G-Cter in SUMO2)). Ser37 bears the Phosphoserine mark. 247 to 253 is an ATP binding site; that stretch reads PGTGKTL. Lys315 carries the post-translational modification N6,N6,N6-trimethyllysine; by VCPKMT. Positions 348 and 384 each coordinate ATP. Thr436 is subject to Phosphothreonine. A Phosphoserine modification is found at Ser462. An N6-acetyllysine mark is found at Lys502 and Lys505. An ATP-binding site is contributed by 521–526; the sequence is GCGKTL. An N6-acetyllysine; alternate modification is found at Lys668. Lys668 is subject to N6-succinyllysine; alternate. Ser702 is modified (phosphoserine). A disordered region spans residues 708-727; it reads RRERERQTNPSAMEVEEDDP. Position 754 is an N6-acetyllysine (Lys754). The tract at residues 768–806 is disordered; that stretch reads FGSFRFPSGNQGGAGPSQGSGGGTGGNVYTEDNDDDLYG. Ser770, Ser775, and Ser787 each carry phosphoserine. Positions 777-793 are enriched in gly residues; that stretch reads NQGGAGPSQGSGGGTGG. Positions 797–806 are interaction with UBXN6; sequence TEDNDDDLYG. The short motif at 802 to 806 is the PIM motif element; that stretch reads DDLYG. Tyr805 bears the Phosphotyrosine mark.

The protein belongs to the AAA ATPase family. Homohexamer. Forms a ring-shaped particle of 12.5 nm diameter, that displays 6-fold radial symmetry. Interacts with NSFL1C-like protein p37; the complex has membrane fusion activity and is required for Golgi and endoplasmic reticulum biogenesis. Interacts with RHBDD1 (via C-terminal domain). Interacts with SELENOS and SYVN1, as well as with DERL1 (via SHP-box motif), DERL2 and DERL3; which probably transfer misfolded proteins from the ER to VCP. Interacts with SVIP and DERL1. Component of a complex required to couple retrotranslocation, ubiquitination and deglycosylation composed of NGLY1, SAKS1, AMFR, VCP and RAD23B. Part of a complex composed of STUB1/CHIP, VCP/p97, CHRNA3, and UBXN2A that modulates the ubiquitination and endoplasmic reticulum-associated degradation (ERAD) of CHRNA3. Within the complex UBXN2A acts as a scaffold protein required for the interaction of CHRNA3 with VCP/p97, this interaction also inhibits CHRNA3 ubiquitination by STUB1/CHIP and subsequently ERAD. Interacts with UBXN2A (via UBX domain); the interaction is required for the interaction of CHRNA3 in the STUB1-VCP-UBXN2A complex. Directly interacts with UBXN4 and RNF19A. Interacts with CASR. Interacts with UBE4B and YOD1. Interacts with clathrin. Interacts with RNF103. Interacts with TRIM13 and TRIM21. Component of a VCP/p97-AMFR/gp78 complex that participates in the final step of the endoplasmic reticulum-associated degradation (ERAD) of HMGCR. Interacts directly with AMFR/gp78 (via its VIM). Interacts with SPRTN; leading to recruitment to stalled replication forks. Part of a ternary complex containing STX5A, NSFL1C and VCP. NSFL1C forms a homotrimer that binds to one end of a VCP homohexamer. The complex binds to membranes enriched in phosphatidylethanolamine-containing lipids and promotes Golgi membrane fusion. Binds to a heterodimer of NPLOC4 and UFD1, binding to this heterodimer inhibits Golgi-membrane fusion. Interaction with VCIP135 leads to dissociation of the complex via ATP hydrolysis by VCP. Part of a ternary complex containing NPLOC4, UFD1 and VCP. Interacts with WASHC5. Interacts with UBOX5. Interacts (via N-terminus) with UBXN7, UBXN8, and probably several other UBX domain-containing proteins (via UBX domains); the interactions are mutually exclusive with VIM-dependent interactions such as those with AMFR and SELENOS. Forms a complex with UBQLN1 and UBXN4. Interacts (via the PIM motif) with RNF31 (via the PUB domain). Interacts with RIGI and RNF125; interaction takes place when RIGI is ubiquitinated via 'Lys-63'-linked ubiquitin on its CARD domains, leading to recruit RNF125 and promote ubiquitination and degradation of RIGI. Interacts with BAG6. Interacts with UBXN10. Interacts with UBXN6; the interaction with UBXN6 is direct and competitive with UFD1. Forms a ternary complex with CAV1 and UBXN6. Interacts with PLAA, UBXN6 and YOD1; may form a complex involved in macroautophagy. Interacts with ANKZF1. Interacts with ubiquitin-binding protein FAF1. Interacts with ZFAND2B (via VIM motif); the interaction is direct. Interacts with ZFAND1 (via its ubiquitin-like region); this interaction occurs in an arsenite-dependent manner. Interacts with CCDC47. Interacts with LMBR1L and UBAC2. Interacts with ATXN3. Interacts with TEX264; bridging VCP to covalent DNA-protein cross-links (DPCs). Phosphorylated by tyrosine kinases in response to T-cell antigen receptor activation. Phosphorylated in mitotic cells. In terms of processing, ISGylated. Post-translationally, methylation at Lys-315 catalyzed by VCPKMT is increased in the presence of ASPSCR1. Lys-315 methylation may decrease ATPase activity.

The protein localises to the cytoplasm. Its subcellular location is the cytosol. It is found in the endoplasmic reticulum. It localises to the nucleus. The protein resides in the stress granule. It catalyses the reaction ATP + H2O = ADP + phosphate + H(+). Necessary for the fragmentation of Golgi stacks during mitosis and for their reassembly after mitosis. Involved in the formation of the transitional endoplasmic reticulum (tER). The transfer of membranes from the endoplasmic reticulum to the Golgi apparatus occurs via 50-70 nm transition vesicles which derive from part-rough, part-smooth transitional elements of the endoplasmic reticulum (tER). Vesicle budding from the tER is an ATP-dependent process. The ternary complex containing UFD1, VCP and NPLOC4 binds ubiquitinated proteins and is necessary for the export of misfolded proteins from the ER to the cytoplasm, where they are degraded by the proteasome. The NPLOC4-UFD1-VCP complex regulates spindle disassembly at the end of mitosis and is necessary for the formation of a closed nuclear envelope. Regulates E3 ubiquitin-protein ligase activity of RNF19A. Component of the VCP/p97-AMFR/gp78 complex that participates in the final step of the sterol-mediated ubiquitination and endoplasmic reticulum-associated degradation (ERAD) of HMGCR. Mediates the endoplasmic reticulum-associated degradation of CHRNA3 in cortical neurons as part of the STUB1-VCP-UBXN2A complex. Involved in endoplasmic reticulum stress-induced pre-emptive quality control, a mechanism that selectively attenuates the translocation of newly synthesized proteins into the endoplasmic reticulum and reroutes them to the cytosol for proteasomal degradation. Involved in clearance process by mediating G3BP1 extraction from stress granules. Also involved in DNA damage response: recruited to double-strand breaks (DSBs) sites in a RNF8- and RNF168-dependent manner and promotes the recruitment of TP53BP1 at DNA damage sites. Recruited to stalled replication forks by SPRTN: may act by mediating extraction of DNA polymerase eta (POLH) to prevent excessive translesion DNA synthesis and limit the incidence of mutations induced by DNA damage. Together with SPRTN metalloprotease, involved in the repair of covalent DNA-protein cross-links (DPCs) during DNA synthesis. Involved in interstrand cross-link repair in response to replication stress by mediating unloading of the ubiquitinated CMG helicase complex. Mediates extraction of PARP1 trapped to chromatin: recognizes and binds ubiquitinated PARP1 and promotes its removal. Required for cytoplasmic retrotranslocation of stressed/damaged mitochondrial outer-membrane proteins and their subsequent proteasomal degradation. Essential for the maturation of ubiquitin-containing autophagosomes and the clearance of ubiquitinated protein by autophagy. Acts as a negative regulator of type I interferon production by interacting with RIGI: interaction takes place when RIGI is ubiquitinated via 'Lys-63'-linked ubiquitin on its CARD domains, leading to recruit RNF125 and promote ubiquitination and degradation of RIGI. May play a role in the ubiquitin-dependent sorting of membrane proteins to lysosomes where they undergo degradation. May more particularly play a role in caveolins sorting in cells. By controlling the steady-state expression of the IGF1R receptor, indirectly regulates the insulin-like growth factor receptor signaling pathway. The protein is Transitional endoplasmic reticulum ATPase (Vcp) of Rattus norvegicus (Rat).